Reading from the N-terminus, the 206-residue chain is LexA repressor (206 aa).

The H-T-H motif DNA-binding region spans 28-48 (RAEIATRLGFKSANAAEEHLK). Residues S123 and K160 each act as for autocatalytic cleavage activity in the active site.

The protein belongs to the peptidase S24 family. In terms of assembly, homodimer.

It carries out the reaction Hydrolysis of Ala-|-Gly bond in repressor LexA.. Functionally, represses a number of genes involved in the response to DNA damage (SOS response), including recA and lexA. In the presence of single-stranded DNA, RecA interacts with LexA causing an autocatalytic cleavage which disrupts the DNA-binding part of LexA, leading to derepression of the SOS regulon and eventually DNA repair. The sequence is that of LexA repressor from Shewanella oneidensis (strain ATCC 700550 / JCM 31522 / CIP 106686 / LMG 19005 / NCIMB 14063 / MR-1).